A 388-amino-acid polypeptide reads, in one-letter code: MGTGVGQTRAEIAQARRVVVKVGSSSLTTPQGGLDHERIRDLTDVLAERRKAGTEVVLVSSGAVAAGMAPLGLTQRPRDLATQQAAASVGQGLLLARYTAEFARHSLTAAQILLTADDLMRRAQYRNAQRAMSRLLEIGAVPIVNENDTVATHEIRFGDNDRLAALVAHLLRADVLVLLTDVDALYDGNPSLPTSTRITQVNGPEDLVGVDLGSANKRGVGTGGMITKVESARIATEAGVATVLTSAANARAALRGDPVGTFFVPAKHRRPSSRQLWLAHATAGRGSVFLDPGAVHAVVTEKASLLPAGVIKVEGDFNAGDPVDLRDENGVLVARGLVNYDSAEIPDLMGRSTRWLARELGAEYSREIVHRDDLVVLRNGSTSDREAC.

Lys-21 is an ATP binding site. Ser-61, Asp-148, and Asn-160 together coordinate substrate. ATP is bound by residues 180–181 and 222–228; these read TD and TGGMITK. The 79-residue stretch at 285–363 folds into the PUA domain; the sequence is RGSVFLDPGA…RWLARELGAE (79 aa).

It belongs to the glutamate 5-kinase family.

Its subcellular location is the cytoplasm. The catalysed reaction is L-glutamate + ATP = L-glutamyl 5-phosphate + ADP. It functions in the pathway amino-acid biosynthesis; L-proline biosynthesis; L-glutamate 5-semialdehyde from L-glutamate: step 1/2. In terms of biological role, catalyzes the transfer of a phosphate group to glutamate to form L-glutamate 5-phosphate. In Thermobifida fusca (strain YX), this protein is Glutamate 5-kinase.